The chain runs to 361 residues: Phosphoserine aminotransferase (361 aa).

Position 42 (Arg42) interacts with L-glutamate. Pyridoxal 5'-phosphate contacts are provided by residues Ala76 to Arg77, Trp102, Thr153, Asp173, and Gln196. Lys197 carries the post-translational modification N6-(pyridoxal phosphate)lysine. Pyridoxal 5'-phosphate is bound at residue Asn238–Thr239.

Belongs to the class-V pyridoxal-phosphate-dependent aminotransferase family. SerC subfamily. In terms of assembly, homodimer. Requires pyridoxal 5'-phosphate as cofactor.

The protein resides in the cytoplasm. It catalyses the reaction O-phospho-L-serine + 2-oxoglutarate = 3-phosphooxypyruvate + L-glutamate. It carries out the reaction 4-(phosphooxy)-L-threonine + 2-oxoglutarate = (R)-3-hydroxy-2-oxo-4-phosphooxybutanoate + L-glutamate. The protein operates within amino-acid biosynthesis; L-serine biosynthesis; L-serine from 3-phospho-D-glycerate: step 2/3. It functions in the pathway cofactor biosynthesis; pyridoxine 5'-phosphate biosynthesis; pyridoxine 5'-phosphate from D-erythrose 4-phosphate: step 3/5. Its function is as follows. Catalyzes the reversible conversion of 3-phosphohydroxypyruvate to phosphoserine and of 3-hydroxy-2-oxo-4-phosphonooxybutanoate to phosphohydroxythreonine. This chain is Phosphoserine aminotransferase, found in Mannheimia succiniciproducens (strain KCTC 0769BP / MBEL55E).